Reading from the N-terminus, the 318-residue chain is MTLKVGVLMGGRSSEREVSLKTGEAVYNALKVKNYLAVKIDVGLDVVERIKEERIDLAFIALHGRYGEDGTIQGLLEMLDIPYTGSGVLASALAMDKAATKKIIQYEGLPTPPFMLVEKKEALKESLQACSERICREMGLPLVVKAPTQGSTIGMSFVHKEEDMAGALELAYDYDPVALVEQFIRGTEVTASILGNEEPVALPLIEIVSATGVYDYKAKYTAGMSDHIIPPRIPEKQQNAIKKLAVSTFKSLGCRGLARVDFIVDKQGNPFILEVNTIPGMTATSLFPDAARAAGIEFPDLIEKLVELAMENCGIRRR.

Residues lysine 101 to glutamate 307 form the ATP-grasp domain. Cysteine 135–threonine 190 is an ATP binding site. The Mg(2+) site is built by aspartate 261, glutamate 274, and asparagine 276.

It belongs to the D-alanine--D-alanine ligase family. The cofactor is Mg(2+). It depends on Mn(2+) as a cofactor.

It localises to the cytoplasm. It catalyses the reaction 2 D-alanine + ATP = D-alanyl-D-alanine + ADP + phosphate + H(+). It functions in the pathway cell wall biogenesis; peptidoglycan biosynthesis. Its function is as follows. Cell wall formation. In Pelotomaculum thermopropionicum (strain DSM 13744 / JCM 10971 / SI), this protein is D-alanine--D-alanine ligase.